The sequence spans 722 residues: Transmembrane channel-like protein 8 (722 aa).

The interval 1 to 21 (MFRQWSVQSGPAPRRPESQAA) is disordered. The Cytoplasmic portion of the chain corresponds to 1–118 (MFRQWSVQSG…GIQSYFTFLR (118 aa)). Phosphoserine is present on residues Ser-6 and Ser-18. The helical transmembrane segment at 119–139 (FLLLLNLLTMLLTACFVLLPL) threads the bilayer. The Lumenal segment spans residues 140-204 (VWLRPPELGP…AGPESSSEYS (65 aa)). An N-linked (GlcNAc...) asparagine glycan is attached at Asn-184. A helical membrane pass occupies residues 205 to 225 (IRLAYLLSPMVCLLLCFCGIL). The Cytoplasmic segment spans residues 226-307 (QRMAEGLPQQ…CRLLTYLRTN (82 aa)). Residues 308-328 (ILIVLLVVGAISAIFWATKYS) form a helical membrane-spanning segment. Residues 329 to 375 (QDNKEESLFLVLQYLPPGVISLVNFLGPQLFTVLIQLENYPPGTEVN) lie on the Lumenal side of the membrane. Residues 366 to 534 (ENYPPGTEVN…SPRRFRASSS (169 aa)) form a TMC domain region. An N-linked (GlcNAc...) asparagine glycan is attached at Asn-375. The helical transmembrane segment at 376-396 (LTLIWCVVLKLASLGMFSFSL) threads the bilayer. The Cytoplasmic portion of the chain corresponds to 397-430 (GQTVLCIGRNKTSCESYGYNACDYQCWENSVGEE). A helical membrane pass occupies residues 431-451 (LYKLIIFNFLLTVAFAFLVSL). Over 452–492 (PRRLLVERFSGWFWTWLDREEFLVPKNVLDIVAAQTVTWMG) the chain is Lumenal. A helical transmembrane segment spans residues 493-513 (LFYCPLLPLLNSVFLFLTFYI). At 514 to 536 (KKYTLLRNSRASPRRFRASSSTF) the chain is on the cytoplasmic side. The chain crosses the membrane as a helical span at residues 537–557 (FFHLVLLLGLLLAAVPLAYVI). Topologically, residues 558–598 (SSTHSSWDCGLFTNYSAPWQVVPELVALQLPLPSQRALRYL) are lumenal. Asn-571 carries an N-linked (GlcNAc...) asparagine glycan. Residues 599 to 619 (SSHAFSFPLLILLSIVLTVCI) traverse the membrane as a helical segment. Residues 620–722 (SQSRANARAI…RFHFPSRTEL (103 aa)) are Cytoplasmic-facing. A phosphoserine mark is found at Ser-658, Ser-663, and Ser-673. The tract at residues 658-722 (SPEPGSPHSR…RFHFPSRTEL (65 aa)) is disordered. Residues 678 to 687 (FPCPGSPGPR) are compositionally biased toward pro residues. Over residues 689 to 712 (PRLAPSNRLSSSSLGAPSASVPAS) the composition is skewed to low complexity. Ser-698 is modified (phosphoserine).

Belongs to the TMC family. In terms of assembly, interacts with TMC6. Interacts and forms a complex with TMC6 and CIB1; the interaction stabilizes each component of the complex. Interacts and forms a complex with TMC6 and SLC30A1/ZNT1; the interaction regulates zinc transport into the ER. Interacts with TRADD; the interaction competes with TRADD/RIPK1/TRAF2/cIAPs complex I formation and facilites complex II formation. Expressed in thymus, lung, prostate, placenta, testis and spleen. Expressed in lymphocytes and peripheral lymphocytes.

It is found in the endoplasmic reticulum membrane. It localises to the golgi apparatus membrane. The protein localises to the nucleus membrane. In terms of biological role, acts as a regulatory protein involved in the regulation of numerous cellular processes. Together with its homolog TMC6/EVER1, forms a complex with calcium-binding protein CIB1 in lymphocytes and keratynocytes where TMC6 and TMC8 stabilize CIB1 levels and reciprocally. Together with TMC6, also forms a complex with and activates zinc transporter ZNT1 at the ER membrane of keratynocytes, thereby facilitating zinc uptake into the ER. Also inhibits receptor-mediated calcium release from ER stores and calcium activated and volume regulated chloride channels. Down-regulates the activity of transcription factors induced by zinc and cytokines. Also sequesters TRADD which impairs the recruitment of TRAF2 and RIPK1 in the pro-survival complex I and promotes proapoptotic complex II formation, and may therefore be involved in TNF-induced cell death/survival decisions. In Mus musculus (Mouse), this protein is Transmembrane channel-like protein 8.